Consider the following 57-residue polypeptide: Large ribosomal subunit protein bL32 (57 aa).

Basic residues predominate over residues M1 to Q19. Positions M1 to W20 are disordered.

It belongs to the bacterial ribosomal protein bL32 family.

The protein is Large ribosomal subunit protein bL32 of Mycobacterium leprae (strain Br4923).